Consider the following 282-residue polypeptide: NADPH-dependent 7-cyano-7-deazaguanine reductase (282 aa).

88–90 (IES) serves as a coordination point for substrate. 90-91 (SK) contacts NADPH. Cys-190 serves as the catalytic Thioimide intermediate. Asp-197 functions as the Proton donor in the catalytic mechanism. 229 to 230 (HE) serves as a coordination point for substrate. 258–259 (RG) contacts NADPH.

This sequence belongs to the GTP cyclohydrolase I family. QueF type 2 subfamily. In terms of assembly, homodimer.

Its subcellular location is the cytoplasm. It catalyses the reaction 7-aminomethyl-7-carbaguanine + 2 NADP(+) = 7-cyano-7-deazaguanine + 2 NADPH + 3 H(+). It participates in tRNA modification; tRNA-queuosine biosynthesis. Its function is as follows. Catalyzes the NADPH-dependent reduction of 7-cyano-7-deazaguanine (preQ0) to 7-aminomethyl-7-deazaguanine (preQ1). The polypeptide is NADPH-dependent 7-cyano-7-deazaguanine reductase (Escherichia coli (strain UTI89 / UPEC)).